Here is a 602-residue protein sequence, read N- to C-terminus: Elongation factor 4 (602 aa).

One can recognise a tr-type G domain in the interval 6–188; that stretch reads KYIRNFCIIA…AIIRRVPPPR (183 aa). Residues 18-23 and 135-138 each bind GTP; these read DHGKST and NKID.

This sequence belongs to the TRAFAC class translation factor GTPase superfamily. Classic translation factor GTPase family. LepA subfamily.

It is found in the cell membrane. The enzyme catalyses GTP + H2O = GDP + phosphate + H(+). Its function is as follows. Required for accurate and efficient protein synthesis under certain stress conditions. May act as a fidelity factor of the translation reaction, by catalyzing a one-codon backward translocation of tRNAs on improperly translocated ribosomes. Back-translocation proceeds from a post-translocation (POST) complex to a pre-translocation (PRE) complex, thus giving elongation factor G a second chance to translocate the tRNAs correctly. Binds to ribosomes in a GTP-dependent manner. This Moorella thermoacetica (strain ATCC 39073 / JCM 9320) protein is Elongation factor 4.